A 603-amino-acid chain; its full sequence is Elongation factor 4 (603 aa).

One can recognise a tr-type G domain in the interval 6-188 (KYVRNFSIIA…DIVKNVPAPI (183 aa)). GTP is bound by residues 18–23 (DHGKST) and 135–138 (NKID).

The protein belongs to the TRAFAC class translation factor GTPase superfamily. Classic translation factor GTPase family. LepA subfamily.

The protein resides in the cell membrane. The catalysed reaction is GTP + H2O = GDP + phosphate + H(+). Its function is as follows. Required for accurate and efficient protein synthesis under certain stress conditions. May act as a fidelity factor of the translation reaction, by catalyzing a one-codon backward translocation of tRNAs on improperly translocated ribosomes. Back-translocation proceeds from a post-translocation (POST) complex to a pre-translocation (PRE) complex, thus giving elongation factor G a second chance to translocate the tRNAs correctly. Binds to ribosomes in a GTP-dependent manner. The polypeptide is Elongation factor 4 (Finegoldia magna (strain ATCC 29328 / DSM 20472 / WAL 2508) (Peptostreptococcus magnus)).